The chain runs to 424 residues: UPF0597 protein Shewmr7_2876 (424 aa).

The protein belongs to the UPF0597 family.

The sequence is that of UPF0597 protein Shewmr7_2876 from Shewanella sp. (strain MR-7).